A 406-amino-acid polypeptide reads, in one-letter code: Acetate kinase (406 aa).

Asparagine 7 is a Mg(2+) binding site. An ATP-binding site is contributed by lysine 14. Residue arginine 90 participates in substrate binding. Residue aspartate 147 is the Proton donor/acceptor of the active site. Residues 207 to 211, 283 to 285, and 331 to 335 each bind ATP; these read HLGNG, DMR, and GVGEN. Glutamate 385 is a Mg(2+) binding site.

It belongs to the acetokinase family. Homodimer. It depends on Mg(2+) as a cofactor. Mn(2+) is required as a cofactor.

The protein resides in the cytoplasm. The catalysed reaction is acetate + ATP = acetyl phosphate + ADP. It participates in metabolic intermediate biosynthesis; acetyl-CoA biosynthesis; acetyl-CoA from acetate: step 1/2. In terms of biological role, catalyzes the formation of acetyl phosphate from acetate and ATP. Can also catalyze the reverse reaction. This Thermosipho africanus (strain TCF52B) protein is Acetate kinase.